A 211-amino-acid chain; its full sequence is LexA repressor (211 aa).

A DNA-binding region (H-T-H motif) is located at residues Arg30–Lys50. Catalysis depends on for autocatalytic cleavage activity residues Ser128 and Lys165.

It belongs to the peptidase S24 family. As to quaternary structure, homodimer.

The catalysed reaction is Hydrolysis of Ala-|-Gly bond in repressor LexA.. Represses a number of genes involved in the response to DNA damage (SOS response), including recA and lexA. In the presence of single-stranded DNA, RecA interacts with LexA causing an autocatalytic cleavage which disrupts the DNA-binding part of LexA, leading to derepression of the SOS regulon and eventually DNA repair. In Haemophilus ducreyi (strain 35000HP / ATCC 700724), this protein is LexA repressor.